Reading from the N-terminus, the 277-residue chain is MAIHLYKTSTPSTRNGAVDSQAKSNTRNTRKNLIYGQHRCGKGRNARGIITARHRGGGHKRLYRKIDFRRNEKDIYGRIVTIEYDPNRNAYICLIHYGDGEKRYILHPRGAIIGDTIISGTEVPIKMGNALPLTDMPLGTAIHNIEITLGKGGQLARAAGAVAKLIAKEGKSATLKLPSGEVRLISKNCSATVGQVGNTGVNQKSLGRAGSKCWLGKRPVVRGVVMNPVDHPHGGGEGRAPIGRKKPATPWGYPALGRRSRKRNKYSDNLILRRRSK.

Disordered stretches follow at residues 1 to 31 and 227 to 277; these read MAIHLYKTSTPSTRNGAVDSQAKSNTRNTRK and NPVD…RRSK.

This sequence belongs to the universal ribosomal protein uL2 family. As to quaternary structure, part of the 50S ribosomal subunit.

It is found in the plastid. Its subcellular location is the chloroplast. The polypeptide is Large ribosomal subunit protein uL2cz/uL2cy (rpl2-A) (Manihot esculenta (Cassava)).